The primary structure comprises 954 residues: Protein teashirt (954 aa).

Disordered stretches follow at residues 20–91 (LPTA…SLPS), 167–207 (ESAE…PQLG), and 276–331 (VKGG…GSGA). Residues 47-57 (HGGGAGSGGVG) are compositionally biased toward gly residues. The segment covering 292-303 (SKATTPQAASQP) has biased composition (polar residues). The span at 318-328 (SGGGSGGGAAG) shows a compositional bias: gly residues. The segment at 354 to 378 (FRCVWCKQSFPTLEALTTHMKDSKH) adopts a C2H2-type 1 zinc-finger fold. Residues 383–444 (VPPFGNLPSN…YRGDPPTPLP (62 aa)) form a disordered region. Positions 417–428 (SGSASNHSPSAN) are enriched in low complexity. C2H2-type zinc fingers lie at residues 466–490 (LKCM…ETQH) and 533–557 (LTCK…KNNH). 3 disordered regions span residues 563–622 (LQSA…DKND), 689–714 (FDTP…TSPV), and 748–935 (TSSE…NLTA). Positions 568–578 (ARKRPAPKKRE) are enriched in basic residues. Positions 579–588 (KSLPVRKLLE) are enriched in basic and acidic residues. Positions 696-712 (ASLPASSPSNSSTKNTS) are enriched in low complexity. Phosphoserine is present on residues serine 750 and serine 758. Positions 778-807 (GHDEESSKPAIKQEREAESKPVKMEIKSEF) are enriched in basic and acidic residues. A compositionally biased stretch (low complexity) spans 842 to 851 (PKTPSSAASP). 2 stretches are compositionally biased toward polar residues: residues 862-885 (AESQ…GSSE) and 893-907 (DSLN…SLGS). The segment covering 910–926 (AGANSRAKLAAAAAAGG) has biased composition (low complexity).

The protein belongs to the teashirt C2H2-type zinc-finger protein family. As to quaternary structure, binds arm. In terms of tissue distribution, shows a dynamic expression pattern during embryogenesis. Expressed in the embryonic trunk region (PS 3-13) with expression strongest in the thoracic segments. Expressed in a small group of cells corresponding to the anal tuft from stage 14. Strongly expressed in the embryonic ventral nerve cord. Also expressed in the proximal domain of the leg imaginal disk and in the region of the wing disk that will give rise to the proximal wing hinge. Expressed at high levels in the anterior and central embryonic midgut mesoderm and in the embryonic midgut endoderm. Expressed at a low level in more posterior visceral mesoderm of the gut. From stage 12 onwards, tsh and tio are colocalized in some cells of the CNS, trunk epidermis, hindgut and Malpighian tubules.

It is found in the nucleus. The protein resides in the cytoplasm. Homeotic protein that acts downstream of Arm in the Wg cascade during embryogenesis to determine segment identity throughout the entire trunk. Acts cooperatively with other trunk homeotic proteins to repress head homeotic genes and therefore repress head segmental identity. Necessary, in combination with Scr, for the formation of the prothoracic segment. Promotes eye development in the dorsal region of the eye disk and suppresses eye development in the ventral region in combination with Wg-signaling and several early dorso-ventral eye patterning genes. Required for proper development of proximal leg segments. Has differential functions along the dorso-ventral axs of the antennal and leg disks. May play a role in wing hinge development. Possible involvement in chromatin structure for modulation of transcription. Binds DNA and can act as both a transcriptional repressor and activator. Positively regulates its own expression as well as that of Dll. Negatively regulates the expression of mod. Required for Wg-mediated transcriptional repression of Ubx in the midgut. Also represses transcription of lab in the midgut and is necessary for the proper formation of anterior and central midgut structures. Tiptop (tio) and teashirt (tsh) have, on the whole, common activities. Tio and tsh repress each other's expression and tsh has a crucial role for trunk patterning that is in part masked by ectopic expression of tiptop. Both genes share a common activity required for the activation of Ser and svb and the maintenance of en and wg. The sequence is that of Protein teashirt (tsh) from Drosophila melanogaster (Fruit fly).